Here is a 251-residue protein sequence, read N- to C-terminus: Imidazole glycerol phosphate synthase subunit HisF (251 aa).

Active-site residues include aspartate 11 and aspartate 130.

Belongs to the HisA/HisF family. Heterodimer of HisH and HisF.

It is found in the cytoplasm. It catalyses the reaction 5-[(5-phospho-1-deoxy-D-ribulos-1-ylimino)methylamino]-1-(5-phospho-beta-D-ribosyl)imidazole-4-carboxamide + L-glutamine = D-erythro-1-(imidazol-4-yl)glycerol 3-phosphate + 5-amino-1-(5-phospho-beta-D-ribosyl)imidazole-4-carboxamide + L-glutamate + H(+). It participates in amino-acid biosynthesis; L-histidine biosynthesis; L-histidine from 5-phospho-alpha-D-ribose 1-diphosphate: step 5/9. Its function is as follows. IGPS catalyzes the conversion of PRFAR and glutamine to IGP, AICAR and glutamate. The HisF subunit catalyzes the cyclization activity that produces IGP and AICAR from PRFAR using the ammonia provided by the HisH subunit. In Chlorobium phaeobacteroides (strain DSM 266 / SMG 266 / 2430), this protein is Imidazole glycerol phosphate synthase subunit HisF.